The following is a 387-amino-acid chain: Putative gustatory receptor 22d (387 aa).

Residues 1 to 43 (MFRPRCGLRQKFVYVILKSILYSSWLLGIFPFKYEPKKRRLRR) are Cytoplasmic-facing. A helical transmembrane segment spans residues 44 to 64 (SMWLILFGVVISSSLLILMVK). The Extracellular segment spans residues 65–82 (QSAEDREHGIMLDVFQRN). The chain crosses the membrane as a helical span at residues 83-103 (ALLYQISSLMGVVGVVSICTV). The Cytoplasmic segment spans residues 104–142 (HLRTLWRSKHLEEIYNGLMLLEAKYFCSNAVECPAFDGY). A helical transmembrane segment spans residues 143–163 (VIQKGVVIVVGLLAPWMVHFG). At 164 to 184 (MPDSKLPVLNVLVVSMVKLGT) the chain is on the extracellular side. Residues 185 to 205 (LLLALHYHLGVVIIYRFVWLI) form a helical membrane-spanning segment. Residues 206–252 (NRELLSLVCSLRGNHKGSSSRVRFLLKLYNKLVNLYSKLADCYDCQT) lie on the Cytoplasmic side of the membrane. A helical membrane pass occupies residues 253–273 (VLMMAIFLAANIIVCFYMIVY). The Extracellular portion of the chain corresponds to 274-281 (RISLSKMS). A helical membrane pass occupies residues 282-302 (FFVMLIMFPLAIANNFMDFWL). At 303-363 (SMKVCDLLQK…HCGLFHVNRE (61 aa)) the chain is on the cytoplasmic side. Residues 364-384 (MGFKMFVASVLYLLYLVQFDY) form a helical membrane-spanning segment. Over 385-387 (MNL) the chain is Extracellular.

It belongs to the insect chemoreceptor superfamily. Gustatory receptor (GR) family. Gr22e subfamily. As to expression, expressed in neurons of the dorsal pharyngeal sense organs of larvae.

It localises to the cell membrane. In terms of biological role, probable gustatory receptor which mediates acceptance or avoidance behavior, depending on its substrates. This Drosophila melanogaster (Fruit fly) protein is Putative gustatory receptor 22d.